We begin with the raw amino-acid sequence, 784 residues long: Endonuclease MutS2 (784 aa).

335–342 serves as a coordination point for ATP; that stretch reads GPNTGGKT. Positions 709–784 constitute a Smr domain; it reads LDLRGERYED…GTGVTIVELK (76 aa).

This sequence belongs to the DNA mismatch repair MutS family. MutS2 subfamily. Homodimer. Binds to stalled ribosomes, contacting rRNA.

Functionally, endonuclease that is involved in the suppression of homologous recombination and thus may have a key role in the control of bacterial genetic diversity. In terms of biological role, acts as a ribosome collision sensor, splitting the ribosome into its 2 subunits. Detects stalled/collided 70S ribosomes which it binds and splits by an ATP-hydrolysis driven conformational change. Acts upstream of the ribosome quality control system (RQC), a ribosome-associated complex that mediates the extraction of incompletely synthesized nascent chains from stalled ribosomes and their subsequent degradation. Probably generates substrates for RQC. This chain is Endonuclease MutS2, found in Geobacillus sp. (strain WCH70).